The chain runs to 912 residues: Translation initiation factor IF-2 (912 aa).

Positions 185 to 204 are disordered; sequence NATRPKRKTKEEKQKEREER. The segment covering 193-204 has biased composition (basic and acidic residues); sequence TKEEKQKEREER. Residues 411–581 form the tr-type G domain; the sequence is LRPPIVTIMG…LLEAELLDLK (171 aa). The segment at 420–427 is G1; the sequence is GHVDHGKT. 420-427 contacts GTP; it reads GHVDHGKT. The segment at 445–449 is G2; that stretch reads GITQH. The tract at residues 467-470 is G3; the sequence is DTPG. GTP is bound by residues 467–471 and 521–524; these read DTPGH and NKID. Residues 521–524 form a G4 region; that stretch reads NKID. A G5 region spans residues 557–559; it reads SAK.

It belongs to the TRAFAC class translation factor GTPase superfamily. Classic translation factor GTPase family. IF-2 subfamily.

The protein localises to the cytoplasm. One of the essential components for the initiation of protein synthesis. Protects formylmethionyl-tRNA from spontaneous hydrolysis and promotes its binding to the 30S ribosomal subunits. Also involved in the hydrolysis of GTP during the formation of the 70S ribosomal complex. This Azobacteroides pseudotrichonymphae genomovar. CFP2 protein is Translation initiation factor IF-2.